A 429-amino-acid polypeptide reads, in one-letter code: Adenylosuccinate synthetase (429 aa).

Residues 12–18 (GDEGKGK) and 40–42 (GHT) each bind GTP. Asp13 (proton acceptor) is an active-site residue. The Mg(2+) site is built by Asp13 and Gly40. IMP-binding positions include 13-16 (DEGK), 38-41 (NAGH), Thr129, Arg143, Gln223, Thr238, and Arg302. The active-site Proton donor is His41. 298–304 (TVTGRPR) is a substrate binding site. GTP is bound by residues Arg304, 330-332 (KLD), and 412-414 (STS).

This sequence belongs to the adenylosuccinate synthetase family. In terms of assembly, homodimer. The cofactor is Mg(2+).

It is found in the cytoplasm. It carries out the reaction IMP + L-aspartate + GTP = N(6)-(1,2-dicarboxyethyl)-AMP + GDP + phosphate + 2 H(+). It functions in the pathway purine metabolism; AMP biosynthesis via de novo pathway; AMP from IMP: step 1/2. In terms of biological role, plays an important role in the de novo pathway of purine nucleotide biosynthesis. Catalyzes the first committed step in the biosynthesis of AMP from IMP. The polypeptide is Adenylosuccinate synthetase (Gluconobacter oxydans (strain 621H) (Gluconobacter suboxydans)).